A 225-amino-acid polypeptide reads, in one-letter code: Fibronectin type III domain-containing protein (225 aa).

The N-terminal stretch at 1–17 (MFSFGIILLTVVSFTNA) is a signal peptide. The 101-residue stretch at 106 to 206 (PPTNVIVEST…MPLNVKTPDI (101 aa)) folds into the Fibronectin type-III domain.

In terms of tissue distribution, component of the organic matrix of calcified shell layers like nacre and prisms.

It localises to the secreted. This chain is Fibronectin type III domain-containing protein, found in Mytilus californianus (California mussel).